The following is a 236-amino-acid chain: tRNA (guanine-N(1)-)-methyltransferase (236 aa).

S-adenosyl-L-methionine-binding positions include G110 and 129–134; that span reads LGDFVL.

The protein belongs to the RNA methyltransferase TrmD family. As to quaternary structure, homodimer.

Its subcellular location is the cytoplasm. It carries out the reaction guanosine(37) in tRNA + S-adenosyl-L-methionine = N(1)-methylguanosine(37) in tRNA + S-adenosyl-L-homocysteine + H(+). In terms of biological role, specifically methylates guanosine-37 in various tRNAs. The chain is tRNA (guanine-N(1)-)-methyltransferase from Clostridium perfringens (strain ATCC 13124 / DSM 756 / JCM 1290 / NCIMB 6125 / NCTC 8237 / Type A).